The chain runs to 789 residues: Disintegrin and metalloproteinase domain-containing protein 7 (789 aa).

The signal sequence occupies residues 1 to 25; the sequence is MFPTGIFLMSVLISQMQGRGIVGVE. The propeptide occupies 26 to 176; it reads GQELVHPKKL…NYSCEGLNFT (151 aa). N-linked (GlcNAc...) asparagine glycans are attached at residues asparagine 84, asparagine 167, and asparagine 174. At 177–668 the chain is on the extracellular side; it reads KKSTLIDAKI…WGEALNLTSV (492 aa). One can recognise a Peptidase M12B domain in the interval 199-393; the sequence is KFIELFVVAD…QKPACILNNP (195 aa). Cystine bridges form between cysteine 310-cysteine 388, cysteine 350-cysteine 372, cysteine 352-cysteine 357, and cysteine 459-cysteine 479. A Disintegrin domain is found at 401–487; sequence YPFCGNKKVD…ECPKDESQAN (87 aa). 3 N-linked (GlcNAc...) asparagine glycosylation sites follow: asparagine 583, asparagine 628, and asparagine 664. The chain crosses the membrane as a helical span at residues 669-689; sequence SIMVVVLVMVIIGVGLVILLI. Residues 690 to 789 lie on the Cytoplasmic side of the membrane; that stretch reads RYQKCIKMKQ…DSQSDCTRLG (100 aa). A compositionally biased stretch (basic and acidic residues) spans 762-771; that stretch reads DPRGIADPKQ. The disordered stretch occupies residues 762–789; the sequence is DPRGIADPKQNDNMNLNLDSQSDCTRLG. Polar residues predominate over residues 772-789; the sequence is NDNMNLNLDSQSDCTRLG.

Interacts with ITM2B in sperm; the interaction increases following capacitation. Interacts with HSPA5 and CANX. In terms of tissue distribution, expressed specifically in the caput region of the epididymis (at protein level).

Its subcellular location is the membrane. Functionally, required for normal male fertility via maintenance of epithelial cell morphology in the caput epididymis and subsequently correct epididymis lumen structure required for sperm development. Plays a role in sperm motility, flagella morphology and tyrosine phosphorylation during sperm capacitance. Plays a role in normal expression levels of HSPA5, ITM2B and ADAM2 in sperm both prior to and post-capacitation. This is a non catalytic metalloprotease-like protein. The polypeptide is Disintegrin and metalloproteinase domain-containing protein 7 (Rattus norvegicus (Rat)).